The sequence spans 103 residues: uncharacterized protein (103 aa).

This is an uncharacterized protein from Sinorhizobium fredii (strain NBRC 101917 / NGR234).